Here is a 186-residue protein sequence, read N- to C-terminus: MMRPVSSSNVAFCTSGKSSCLNQDTMRGVDQFGLYATQQSKYSHPVTHKNISCQTQETINETHLQTSTSRDLDTKSDLKKKKNLGRSGKRGRPSGTTKSAGYRTSTGRPLGTTKAAGFKTSPGRPLGTTKAAGYKVSPGRPPGSIKALSRLANLGYPSNNAGFSYPTALSRGLHSAVETTLKHPIE.

Polar residues predominate over residues 60–69 (NETHLQTSTS). The disordered stretch occupies residues 60–140 (NETHLQTSTS…AAGYKVSPGR (81 aa)). Over residues 78–92 (LKKKKNLGRSGKRGR) the composition is skewed to basic residues. Over residues 94–107 (SGTTKSAGYRTSTG) the composition is skewed to polar residues.

It belongs to the UPF0461 family.

In Xenopus tropicalis (Western clawed frog), this protein is UPF0461 protein C5orf24 homolog.